Here is a 229-residue protein sequence, read N- to C-terminus: ATP synthase subunit a (229 aa).

6 helical membrane passes run 25–45, 86–106, 111–131, 142–162, 181–201, and 202–222; these read ADAI…SLIA, IATL…PGFF, NLNT…IVGI, FMGP…IGHL, LVLM…MMLM, and GVLV…IYIQ.

Belongs to the ATPase A chain family. In terms of assembly, F-type ATPases have 2 components, CF(1) - the catalytic core - and CF(0) - the membrane proton channel. CF(1) has five subunits: alpha(3), beta(3), gamma(1), delta(1), epsilon(1). CF(0) has three main subunits: a(1), b(2) and c(9-12). The alpha and beta chains form an alternating ring which encloses part of the gamma chain. CF(1) is attached to CF(0) by a central stalk formed by the gamma and epsilon chains, while a peripheral stalk is formed by the delta and b chains.

It is found in the cell inner membrane. In terms of biological role, key component of the proton channel; it plays a direct role in the translocation of protons across the membrane. The polypeptide is ATP synthase subunit a (Geobacter sulfurreducens (strain ATCC 51573 / DSM 12127 / PCA)).